The primary structure comprises 763 residues: Polyribonucleotide nucleotidyltransferase (763 aa).

Residues Asp-526 and Asp-532 each contribute to the Mg(2+) site. Residues Pro-592–Ile-651 form the KH domain. The S1 motif domain maps to Gly-663–Val-732. The tract at residues Ser-739–Ala-763 is disordered. The segment covering Ala-743–Glu-752 has biased composition (basic and acidic residues).

The protein belongs to the polyribonucleotide nucleotidyltransferase family. Requires Mg(2+) as cofactor.

The protein resides in the cytoplasm. It carries out the reaction RNA(n+1) + phosphate = RNA(n) + a ribonucleoside 5'-diphosphate. In terms of biological role, involved in mRNA degradation. Catalyzes the phosphorolysis of single-stranded polyribonucleotides processively in the 3'- to 5'-direction. The sequence is that of Polyribonucleotide nucleotidyltransferase from Mycolicibacterium smegmatis (strain ATCC 700084 / mc(2)155) (Mycobacterium smegmatis).